A 585-amino-acid polypeptide reads, in one-letter code: Conglutin alpha 3 (585 aa).

The N-terminal stretch at Met1–Gly23 is a signal peptide. 2 disulfide bridges follow: Cys32-Cys65 and Cys108-Cys406. In terms of domain architecture, Cupin type-1 1 spans Leu37 to His258. 3 disordered regions span residues Glu113–Glu147, Glu199–Gly240, and Lys283–Glu402. Positions Glu136–Glu147 are enriched in basic and acidic residues. Residues Arg211–Gln224 show a composition bias toward basic residues. Residues Arg309 to Pro320 are compositionally biased toward acidic residues. A compositionally biased stretch (basic and acidic residues) spans Glu338–Arg350. A Cupin type-1 2 domain is found at Glu412 to Ser558. Positions Asn565 to His579 are enriched in polar residues. Residues Asn565–Ala585 are disordered.

Belongs to the 11S seed storage protein (globulins) family. In terms of assembly, hexamer; each subunit is composed of an acidic and a basic chain derived from a single precursor and linked by a disulfide bond. Component of globulins complexes which accumulate in seeds.

Sulfur-rich seed storage protein. This protein found in the seeds of many leguminous and non-leguminous plants is the source of sulfur-containing amino acids in seed meals. This Lupinus angustifolius (Narrow-leaved blue lupine) protein is Conglutin alpha 3.